A 132-amino-acid polypeptide reads, in one-letter code: Interleukin-5 (132 aa).

Positions 1 to 19 are cleaved as a signal peptide; it reads MRMLLCLNVLTLSCVWAIA. Residues N45, N74, and N88 are each glycosylated (N-linked (GlcNAc...) asparagine).

The protein belongs to the IL-5 family. Homodimer; disulfide-linked. Interacts with IL5RA. Interacts with CSF2RB.

It is found in the secreted. Its function is as follows. Homodimeric cytokine expressed predominantly by T-lymphocytes and NK cells that plays an important role in the survival, differentiation, and chemotaxis of eosinophils. Acts also on activated and resting B-cells to induce immunoglobulin production, growth, and differentiation. Mechanistically, exerts its biological effects through a receptor composed of IL5RA subunit and the cytokine receptor common subunit beta/CSF2RB. Binding to the receptor leads to activation of various kinases including LYN, SYK and JAK2 and thereby propagates signals through the RAS-MAPK and JAK-STAT5 pathways respectively. The chain is Interleukin-5 (Il5) from Rattus norvegicus (Rat).